A 102-amino-acid chain; its full sequence is Small ribosomal subunit protein uS10 (102 aa).

The protein belongs to the universal ribosomal protein uS10 family. As to quaternary structure, part of the 30S ribosomal subunit.

Its function is as follows. Involved in the binding of tRNA to the ribosomes. In Bifidobacterium adolescentis (strain ATCC 15703 / DSM 20083 / NCTC 11814 / E194a), this protein is Small ribosomal subunit protein uS10.